The chain runs to 338 residues: GTPase Obg (338 aa).

An Obg domain is found at 1–159; sequence MKFVDSASVF…FTLDLELKLM (159 aa). Positions 123–145 are disordered; the sequence is GGRGNQHFATSTHQAPRHAEPGQ. In terms of domain architecture, OBG-type G spans 160-323; it reads ADVGLVGFPN…LKDALWRIIV (164 aa). GTP is bound by residues 166–173, 191–195, 213–216, 280–283, and 304–306; these read GFPNAGKS, FTTLV, DIPG, TKMD, and SAV. Residues Ser173 and Thr193 each coordinate Mg(2+).

The protein belongs to the TRAFAC class OBG-HflX-like GTPase superfamily. OBG GTPase family. As to quaternary structure, monomer. The cofactor is Mg(2+).

It localises to the cytoplasm. In terms of biological role, an essential GTPase which binds GTP, GDP and possibly (p)ppGpp with moderate affinity, with high nucleotide exchange rates and a fairly low GTP hydrolysis rate. Plays a role in control of the cell cycle, stress response, ribosome biogenesis and in those bacteria that undergo differentiation, in morphogenesis control. This Chlorobium chlorochromatii (strain CaD3) protein is GTPase Obg.